The primary structure comprises 530 residues: Zinc finger protein ZIC 4 (530 aa).

2 stretches are compositionally biased toward basic residues: residues 31-40 (HHPHHHHHPP) and 97-113 (NPHH…HHMA). 2 disordered regions span residues 31-50 (HHPH…TGYP) and 87-138 (PGAL…SYSS). The segment at 284-317 (LICKWIEEDQLPKKLCSKTFSTMHELVTHVTVEH) adopts a C2H2-type 1; atypical zinc-finger fold. Residues 326-353 (HICFWEECPREGKPFKAKYKLVNHIRVH) form a C2H2-type 2; atypical zinc finger. 3 consecutive C2H2-type zinc fingers follow at residues 359-383 (FPCP…KRTH), 389-413 (FKCE…SHVH), and 419-443 (YNCK…MKVH). The disordered stretch occupies residues 432–530 (HPSSLRKHMK…YSNWQATNTF (99 aa)). Positions 435–444 (SLRKHMKVHC) are enriched in basic residues. 2 stretches are compositionally biased toward low complexity: residues 455 to 467 (SSIP…SSDS) and 474 to 485 (TSSQPEPPTSSQ). The span at 520 to 530 (SYSNWQATNTF) shows a compositional bias: polar residues.

It belongs to the GLI C2H2-type zinc-finger protein family. In terms of tissue distribution, at mid-gastrula stage (stage 11.5), weakly expressed in the prospective neural fold. Expressed in the neural plate border region at early neurula stage (stage 15) with strongest expression in the prospective regions of the hyoid and branchial crests. Expression in the dorsal central nervous system (CNS) continues through late neurula stage and early tail bud stages with expression strongest in the olfactory placode and expression levels increasing as development progresses. Becomes expressed in somites.

It is found in the nucleus. In terms of biological role, may bind to DNA. Induces neural and neural crest differentiation. Does not induce anterior neural tissue. The sequence is that of Zinc finger protein ZIC 4 (zic4) from Xenopus laevis (African clawed frog).